We begin with the raw amino-acid sequence, 120 residues long: NAD(P)H-quinone oxidoreductase subunit 3, chloroplastic (120 aa).

Helical transmembrane passes span 9–29 (IFWAFLIISSVIPILAFLISG), 64–84 (MFALVFVVFDVETVFLYPWAM), and 88–108 (VLGVSVFIEALIFVLIPIVGS).

Belongs to the complex I subunit 3 family. NDH is composed of at least 16 different subunits, 5 of which are encoded in the nucleus.

The protein localises to the plastid. The protein resides in the chloroplast thylakoid membrane. The catalysed reaction is a plastoquinone + NADH + (n+1) H(+)(in) = a plastoquinol + NAD(+) + n H(+)(out). It catalyses the reaction a plastoquinone + NADPH + (n+1) H(+)(in) = a plastoquinol + NADP(+) + n H(+)(out). Functionally, NDH shuttles electrons from NAD(P)H:plastoquinone, via FMN and iron-sulfur (Fe-S) centers, to quinones in the photosynthetic chain and possibly in a chloroplast respiratory chain. The immediate electron acceptor for the enzyme in this species is believed to be plastoquinone. Couples the redox reaction to proton translocation, and thus conserves the redox energy in a proton gradient. The protein is NAD(P)H-quinone oxidoreductase subunit 3, chloroplastic of Calycanthus floridus var. glaucus (Eastern sweetshrub).